The following is a 118-amino-acid chain: Basic phospholipase A2 PA-9C (118 aa).

7 disulfide bridges follow: Cys-11–Cys-71, Cys-27–Cys-117, Cys-29–Cys-45, Cys-44–Cys-98, Cys-51–Cys-91, Cys-60–Cys-84, and Cys-78–Cys-89. Positions 28, 30, and 32 each coordinate Ca(2+). His-48 is an active-site residue. Asp-49 is a Ca(2+) binding site. Asp-92 is a catalytic residue.

This sequence belongs to the phospholipase A2 family. Group I subfamily. D49 sub-subfamily. Requires Ca(2+) as cofactor. As to expression, expressed by the venom gland.

It is found in the secreted. It catalyses the reaction a 1,2-diacyl-sn-glycero-3-phosphocholine + H2O = a 1-acyl-sn-glycero-3-phosphocholine + a fatty acid + H(+). In terms of biological role, PLA2 catalyzes the calcium-dependent hydrolysis of the 2-acyl groups in 3-sn-phosphoglycerides. The chain is Basic phospholipase A2 PA-9C from Pseudechis australis (Mulga snake).